Consider the following 308-residue polypeptide: Low density lipoprotein receptor adapter protein 1 (308 aa).

Methionine 1 bears the N-acetylmethionine mark. The residue at position 14 (serine 14) is a Phosphoserine. Residues leucine 41 to arginine 195 form the PID domain. The disordered stretch occupies residues glutamate 179–serine 201. 2 positions are modified to phosphoserine: serine 198 and serine 201. Residues leucine 211–glutamate 215 carry the Clathrin box motif. The interval tryptophan 248–leucine 275 is AP-2 complex binding. Residues glutamate 256–arginine 265 carry the [DE]-X(1,2)-F-X-X-[FL]-X-X-X-R motif motif. The interval proline 288–phenylalanine 308 is disordered.

As to quaternary structure, interacts (via PID domain) with LDLR (via NPXY motif). Binds to soluble clathrin trimers. Interacts with AP2B1; the interaction mediates the association with the AP-2 complex. Interacts with VLDLR. Interacts with LRP2.

It is found in the cytoplasm. Functionally, adapter protein (clathrin-associated sorting protein (CLASP)) required for efficient endocytosis of the LDL receptor (LDLR) in polarized cells such as hepatocytes and lymphocytes, but not in non-polarized cells (fibroblasts). May be required for LDL binding and internalization but not for receptor clustering in coated pits. May facilitate the endocytosis of LDLR and LDLR-LDL complexes from coated pits by stabilizing the interaction between the receptor and the structural components of the pits. May also be involved in the internalization of other LDLR family members. Binds to phosphoinositides, which regulate clathrin bud assembly at the cell surface. Required for trafficking of LRP2 to the endocytic recycling compartment which is necessary for LRP2 proteolysis, releasing a tail fragment which translocates to the nucleus and mediates transcriptional repression. This Mus musculus (Mouse) protein is Low density lipoprotein receptor adapter protein 1.